The following is a 358-amino-acid chain: Probable translocation protein Y4yK (358 aa).

It belongs to the FliN/MopA/SpaO family.

Its function is as follows. Could be involved in the secretion of an unknown factor. The protein is Probable translocation protein Y4yK of Sinorhizobium fredii (strain NBRC 101917 / NGR234).